Here is a 189-residue protein sequence, read N- to C-terminus: Peptidyl-tRNA hydrolase (189 aa).

Tyrosine 15 provides a ligand contact to tRNA. Histidine 20 serves as the catalytic Proton acceptor. TRNA contacts are provided by phenylalanine 66, asparagine 68, and asparagine 114.

The protein belongs to the PTH family. As to quaternary structure, monomer.

The protein resides in the cytoplasm. It carries out the reaction an N-acyl-L-alpha-aminoacyl-tRNA + H2O = an N-acyl-L-amino acid + a tRNA + H(+). Functionally, hydrolyzes ribosome-free peptidyl-tRNAs (with 1 or more amino acids incorporated), which drop off the ribosome during protein synthesis, or as a result of ribosome stalling. Catalyzes the release of premature peptidyl moieties from peptidyl-tRNA molecules trapped in stalled 50S ribosomal subunits, and thus maintains levels of free tRNAs and 50S ribosomes. This chain is Peptidyl-tRNA hydrolase, found in Streptococcus pneumoniae serotype 2 (strain D39 / NCTC 7466).